The chain runs to 392 residues: Histidinol-phosphate aminotransferase 2 (392 aa).

N6-(pyridoxal phosphate)lysine is present on Lys228.

The protein belongs to the class-II pyridoxal-phosphate-dependent aminotransferase family. Histidinol-phosphate aminotransferase subfamily. Homodimer. It depends on pyridoxal 5'-phosphate as a cofactor.

The enzyme catalyses L-histidinol phosphate + 2-oxoglutarate = 3-(imidazol-4-yl)-2-oxopropyl phosphate + L-glutamate. Its pathway is amino-acid biosynthesis; L-histidine biosynthesis; L-histidine from 5-phospho-alpha-D-ribose 1-diphosphate: step 7/9. The chain is Histidinol-phosphate aminotransferase 2 from Nitrosospira multiformis (strain ATCC 25196 / NCIMB 11849 / C 71).